The sequence spans 242 residues: Ubiquinone biosynthesis O-methyltransferase (242 aa).

S-adenosyl-L-methionine is bound by residues R44, G64, D85, and M129.

This sequence belongs to the methyltransferase superfamily. UbiG/COQ3 family.

The catalysed reaction is a 3-demethylubiquinol + S-adenosyl-L-methionine = a ubiquinol + S-adenosyl-L-homocysteine + H(+). It catalyses the reaction a 3-(all-trans-polyprenyl)benzene-1,2-diol + S-adenosyl-L-methionine = a 2-methoxy-6-(all-trans-polyprenyl)phenol + S-adenosyl-L-homocysteine + H(+). Its pathway is cofactor biosynthesis; ubiquinone biosynthesis. Its function is as follows. O-methyltransferase that catalyzes the 2 O-methylation steps in the ubiquinone biosynthetic pathway. In Salmonella paratyphi A (strain ATCC 9150 / SARB42), this protein is Ubiquinone biosynthesis O-methyltransferase.